Reading from the N-terminus, the 378-residue chain is uncharacterized protein (378 aa).

The span at 1–11 shows a compositional bias: polar residues; that stretch reads MSQQTTPAEQK. Residues 1 to 33 form a disordered region; sequence MSQQTTPAEQKSLQRKKPPFRADQVGSLLRSEP.

It to B.subtilis YxjH.

This is an uncharacterized protein from Bacillus subtilis (strain 168).